We begin with the raw amino-acid sequence, 464 residues long: Argininosuccinate lyase (464 aa).

The protein belongs to the lyase 1 family. Argininosuccinate lyase subfamily.

The protein localises to the cytoplasm. The enzyme catalyses 2-(N(omega)-L-arginino)succinate = fumarate + L-arginine. Its pathway is amino-acid biosynthesis; L-arginine biosynthesis; L-arginine from L-ornithine and carbamoyl phosphate: step 3/3. The sequence is that of Argininosuccinate lyase from Pseudomonas aeruginosa (strain ATCC 15692 / DSM 22644 / CIP 104116 / JCM 14847 / LMG 12228 / 1C / PRS 101 / PAO1).